The following is a 695-amino-acid chain: Elongation factor G (695 aa).

The 276-residue stretch at 4–279 (EKVRNIGISA…AVTQYLPSPL (276 aa)) folds into the tr-type G domain. Residues 13–20 (AHIDSGKT), 79–83 (DTPGH), and 133–136 (NKMD) contribute to the GTP site.

Belongs to the TRAFAC class translation factor GTPase superfamily. Classic translation factor GTPase family. EF-G/EF-2 subfamily.

The protein localises to the cytoplasm. Catalyzes the GTP-dependent ribosomal translocation step during translation elongation. During this step, the ribosome changes from the pre-translocational (PRE) to the post-translocational (POST) state as the newly formed A-site-bound peptidyl-tRNA and P-site-bound deacylated tRNA move to the P and E sites, respectively. Catalyzes the coordinated movement of the two tRNA molecules, the mRNA and conformational changes in the ribosome. In Rhodopirellula baltica (strain DSM 10527 / NCIMB 13988 / SH1), this protein is Elongation factor G.